Reading from the N-terminus, the 388-residue chain is Subtilisin-like serine protease AsES (388 aa).

An N-terminal signal peptide occupies residues 1 to 15; that stretch reads MRLSLVLALLPVAFG. A propeptide spans 16 to 105 (removed in mature form); sequence APTRRDEPAP…IEQDAIVTLA (90 aa). The 275-residue stretch at 114-388 folds into the Peptidase S8 domain; it reads PWGLARISTR…RLAFNGNPSG (275 aa). Residues Cys-141 and Cys-230 are joined by a disulfide bond. Catalysis depends on charge relay system residues Asp-146 and His-176. Residues Asn-232 and Asn-237 are each glycosylated (N-linked (GlcNAc...) asparagine). Cys-285 and Cys-357 form a disulfide bridge. The active-site Charge relay system is the Ser-331.

It belongs to the peptidase S8 family.

The protein resides in the secreted. Its activity is regulated as follows. The elicitor proteolytic activity is completely inhibited by PMSF. The activity is also significantly reduced by aprotinin (leading to 37% residual activity), by leupeptin (leading to 54% residual activity), by the ovomucoid trypsin inhibitor (leading to 65% residual activity), and by p-aminobenzamidine (leading to 26% residual activity). In terms of biological role, extracellular elicitor protein that induces a strong defense response in strawberry and confers both local and systemic plant resistance against the fungal pathogen Colletotricum acutatum, the casual agent of anthracnose disease. AsES activates a cascade of defense responses, including calcium influx, oxidative burst, hypersensitive cell-death response (HR), accumulation of autofluorescent compounds, cell-wall reinforcement with callose and lignin deposition, salicylic acid accumulation, and expression of defense-related genes, such as PR1, PG1, MYB30, RBOH-D, RBOH-F, CHI23, and FLS. The oxidative burst consists in a progressive extracellular accumulation of H(2)O(2) that starts immediately after the contact with AsES and is preceded by a rapid and transient cell membrane depolarization. During this phase takes place also a rapid intracellular accumulation of NO at the chloroplasts. After the first extracellular H(2)O(2) production phase, two intracellular H(2)O(2) accumulation events occur, the first 2 hours after induction, and the second 7 hours after induction. AsES also produces a transient increase of ion leakage, and a progressive alkalinization of the extracellular medium. Confers also local and systemic plant resistance against Botrytis cinerea in Arabidopsis thaliana. Systemic, but not local resistance is dependent on the length of exposure to AsES. The protection to B.cinerea is due to the induction of the plant defenses via the salicylic acid, jasmonic acid and ethylene signaling pathways. Exhibits subtilisin-like proteolytic activity which is necessary but not sufficient for its elicitor function in strawberry plants. Probably induces defense by means of proteolysis of one or multiple host proteins that are specific targets of this protease. This is Subtilisin-like serine protease AsES from Sarocladium strictum (Black bundle disease fungus).